The sequence spans 318 residues: Protoheme IX farnesyltransferase (318 aa).

9 helical membrane passes run 27 to 47, 52 to 72, 103 to 123, 124 to 144, 152 to 172, 179 to 199, 225 to 245, 248 to 268, and 288 to 308; these read IMML…GMTG, PAMA…AGAI, LTMG…ASNW, LAAA…TMWL, IVIG…AVTG, WILF…LSLL, ILVY…TGLG, IYGA…VAIL, and AFLF…VEHA.

The protein belongs to the UbiA prenyltransferase family. Protoheme IX farnesyltransferase subfamily. Interacts with CtaA.

It localises to the cell inner membrane. It catalyses the reaction heme b + (2E,6E)-farnesyl diphosphate + H2O = Fe(II)-heme o + diphosphate. Its pathway is porphyrin-containing compound metabolism; heme O biosynthesis; heme O from protoheme: step 1/1. Converts heme B (protoheme IX) to heme O by substitution of the vinyl group on carbon 2 of heme B porphyrin ring with a hydroxyethyl farnesyl side group. The polypeptide is Protoheme IX farnesyltransferase (Hyphomonas neptunium (strain ATCC 15444)).